Consider the following 133-residue polypeptide: Nucleoid-associated protein Mb3743c (133 aa).

Positions 98-133 (GAMRPPAPPAAPPGAPGMPGMPGMPGAPGAPPVPGI) are disordered. The span at 102–113 (PPAPPAAPPGAP) shows a compositional bias: pro residues.

This sequence belongs to the YbaB/EbfC family. In terms of assembly, homodimer.

It localises to the cytoplasm. The protein localises to the nucleoid. In terms of biological role, binds to DNA and alters its conformation. May be involved in regulation of gene expression, nucleoid organization and DNA protection. The sequence is that of Nucleoid-associated protein Mb3743c from Mycobacterium bovis (strain ATCC BAA-935 / AF2122/97).